Consider the following 261-residue polypeptide: Cytochrome c oxidase subunit 3 (261 aa).

Over 1–15 (MTHQTHACHMVNPSP) the chain is Mitochondrial matrix. The chain crosses the membrane as a helical span at residues 16–34 (WPLTGALSGLLMTSGLIMW). Topologically, residues 35-40 (FHFNST) are mitochondrial intermembrane. A helical transmembrane segment spans residues 41–66 (TLLMLGLTTNMLTMYQWWRDVIREST). Residues 67 to 72 (FQGHHT) are Mitochondrial matrix-facing. A helical transmembrane segment spans residues 73 to 105 (PNVQKGLRYGMILFIISEVLFFTGFFWAFYHSS). At 106–128 (LAPTPELGGCWPPTGIHPLNPLE) the chain is on the mitochondrial intermembrane side. A helical membrane pass occupies residues 129–152 (VPLLNTSVLLASGVSITWAHHSLM). Residues 153–155 (EGN) lie on the Mitochondrial matrix side of the membrane. Residues 156–183 (RNHMLQALFITIALGVYFTLLQASEYYE) form a helical membrane-spanning segment. The Mitochondrial intermembrane segment spans residues 184–190 (APFTISD). Residues 191–223 (GVYGSTFFVATGFHGLHVIIGSTFLIVCFFRQL) traverse the membrane as a helical segment. Residues 224–232 (KFHFTSSHH) are Mitochondrial matrix-facing. Residues 233 to 256 (FGFEAAAWYWHFVDVVWLFLYVSI) form a helical membrane-spanning segment. Topologically, residues 257 to 261 (YWWGS) are mitochondrial intermembrane.

It belongs to the cytochrome c oxidase subunit 3 family. In terms of assembly, component of the cytochrome c oxidase (complex IV, CIV), a multisubunit enzyme composed of 14 subunits. The complex is composed of a catalytic core of 3 subunits MT-CO1, MT-CO2 and MT-CO3, encoded in the mitochondrial DNA, and 11 supernumerary subunits COX4I, COX5A, COX5B, COX6A, COX6B, COX6C, COX7A, COX7B, COX7C, COX8 and NDUFA4, which are encoded in the nuclear genome. The complex exists as a monomer or a dimer and forms supercomplexes (SCs) in the inner mitochondrial membrane with NADH-ubiquinone oxidoreductase (complex I, CI) and ubiquinol-cytochrome c oxidoreductase (cytochrome b-c1 complex, complex III, CIII), resulting in different assemblies (supercomplex SCI(1)III(2)IV(1) and megacomplex MCI(2)III(2)IV(2)).

The protein resides in the mitochondrion inner membrane. The enzyme catalyses 4 Fe(II)-[cytochrome c] + O2 + 8 H(+)(in) = 4 Fe(III)-[cytochrome c] + 2 H2O + 4 H(+)(out). In terms of biological role, component of the cytochrome c oxidase, the last enzyme in the mitochondrial electron transport chain which drives oxidative phosphorylation. The respiratory chain contains 3 multisubunit complexes succinate dehydrogenase (complex II, CII), ubiquinol-cytochrome c oxidoreductase (cytochrome b-c1 complex, complex III, CIII) and cytochrome c oxidase (complex IV, CIV), that cooperate to transfer electrons derived from NADH and succinate to molecular oxygen, creating an electrochemical gradient over the inner membrane that drives transmembrane transport and the ATP synthase. Cytochrome c oxidase is the component of the respiratory chain that catalyzes the reduction of oxygen to water. Electrons originating from reduced cytochrome c in the intermembrane space (IMS) are transferred via the dinuclear copper A center (CU(A)) of subunit 2 and heme A of subunit 1 to the active site in subunit 1, a binuclear center (BNC) formed by heme A3 and copper B (CU(B)). The BNC reduces molecular oxygen to 2 water molecules using 4 electrons from cytochrome c in the IMS and 4 protons from the mitochondrial matrix. In Gazella saudiya (Saudi gazelle), this protein is Cytochrome c oxidase subunit 3 (MT-CO3).